Here is a 150-residue protein sequence, read N- to C-terminus: Large ribosomal subunit protein eL19 (150 aa).

Residues 56 to 89 (KGQSRARARAFQEARKKGRHRGPGSKKGKKTARM) are disordered. The span at 71–89 (KKGRHRGPGSKKGKKTARM) shows a compositional bias: basic residues.

The protein belongs to the eukaryotic ribosomal protein eL19 family. In terms of assembly, part of the 50S ribosomal subunit.

Functionally, binds to the 23S rRNA. The chain is Large ribosomal subunit protein eL19 from Thermococcus kodakarensis (strain ATCC BAA-918 / JCM 12380 / KOD1) (Pyrococcus kodakaraensis (strain KOD1)).